Reading from the N-terminus, the 291-residue chain is Beta-lactamase Toho-1 (291 aa).

A signal peptide spans 1–29; sequence MMTQSIRRSMLTVMATLPLLFSSATLHAQ. The Acyl-ester intermediate role is filled by Ser73. 237–239 is a binding site for substrate; sequence KTG.

The protein belongs to the class-A beta-lactamase family. As to quaternary structure, monomer.

The catalysed reaction is a beta-lactam + H2O = a substituted beta-amino acid. Has strong cefotaxime-hydrolyzing activity. The polypeptide is Beta-lactamase Toho-1 (bla) (Escherichia coli).